The following is a 138-amino-acid chain: Putative pre-16S rRNA nuclease (138 aa).

It belongs to the YqgF nuclease family.

The protein localises to the cytoplasm. Functionally, could be a nuclease involved in processing of the 5'-end of pre-16S rRNA. The polypeptide is Putative pre-16S rRNA nuclease (Bacteroides thetaiotaomicron (strain ATCC 29148 / DSM 2079 / JCM 5827 / CCUG 10774 / NCTC 10582 / VPI-5482 / E50)).